The primary structure comprises 310 residues: Pyrimidine-specific ribonucleoside hydrolase RihA (310 aa).

Residue histidine 240 is part of the active site.

The protein belongs to the IUNH family. RihA subfamily.

Functionally, hydrolyzes cytidine or uridine to ribose and cytosine or uracil, respectively. This is Pyrimidine-specific ribonucleoside hydrolase RihA from Photobacterium profundum (strain SS9).